The chain runs to 162 residues: Peroxiredoxin-2 (162 aa).

A Thioredoxin domain is found at I4–L162. C51 acts as the Cysteine sulfenic acid (-SOH) intermediate in catalysis.

This sequence belongs to the peroxiredoxin family. Prx5 subfamily. In terms of assembly, monomer. Homodimer. Glutathionylation of C(P) causes the dimer to dissociate. Subsequent reduction of the mixed disulfide bond leads again to dimerization.

The catalysed reaction is [glutaredoxin]-dithiol + a hydroperoxide = [glutaredoxin]-disulfide + an alcohol + H2O. In terms of biological role, thiol-specific peroxidase that catalyzes the reduction of hydrogen peroxide and organic hydroperoxides to water and alcohols, respectively. Can reduce H(2)O(2) and short chain organic, fatty acid, and phospholipid hydroperoxides. Plays a role in cell protection against oxidative stress by detoxifying peroxides. The polypeptide is Peroxiredoxin-2 (Populus trichocarpa (Western balsam poplar)).